The primary structure comprises 147 residues: 6-pyruvoyl tetrahydrobiopterin synthase (147 aa).

Histidine 26 is a binding site for Zn(2+). Residue cysteine 45 is the Proton acceptor of the active site. Residues histidine 51 and histidine 53 each coordinate Zn(2+). Active-site charge relay system residues include histidine 92 and glutamate 136.

Belongs to the PTPS family. In terms of assembly, homohexamer formed of two homotrimers in a head to head fashion. Requires Zn(2+) as cofactor.

It carries out the reaction 7,8-dihydroneopterin 3'-triphosphate = 6-pyruvoyl-5,6,7,8-tetrahydropterin + triphosphate + H(+). The protein operates within cofactor biosynthesis; tetrahydrobiopterin biosynthesis; tetrahydrobiopterin from 7,8-dihydroneopterin triphosphate: step 1/3. Functionally, involved in the biosynthesis of tetrahydrobiopterin, an essential cofactor of aromatic amino acid hydroxylases. Catalyzes the transformation of 7,8-dihydroneopterin triphosphate into 6-pyruvoyl tetrahydropterin. The sequence is that of 6-pyruvoyl tetrahydrobiopterin synthase (pts) from Poecilia reticulata (Guppy).